A 188-amino-acid polypeptide reads, in one-letter code: Phospholipase A2 inhibitor 31 kDa subunit (188 aa).

8 cysteine pairs are disulfide-bonded: cysteine 3–cysteine 27, cysteine 6–cysteine 13, cysteine 20–cysteine 48, cysteine 54–cysteine 75, cysteine 76–cysteine 81, cysteine 99–cysteine 124, cysteine 117–cysteine 146, and cysteine 150–cysteine 172. N-linked (GlcNAc...) asparagine glycosylation occurs at asparagine 157.

It belongs to the CNF-like-inhibitor family. As to quaternary structure, heterodimer with phospholipase A2 inhibitor 25 kDa. N-glycosylated. As to expression, expressed by the liver.

The protein resides in the secreted. Inhibits the enzymatic activity of phospholipase A2. The sequence is that of Phospholipase A2 inhibitor 31 kDa subunit from Naja kaouthia (Monocled cobra).